A 757-amino-acid chain; its full sequence is Primary amine oxidase (757 aa).

Residues 1–30 (MGSPSLYSARKTTLALAVALSFAWQAPVFA) form the signal peptide. Substrate contacts are provided by residues 411–422 (YLDSGDYGMGTL) and 493–498 (VGNYDY). The active-site Proton acceptor is aspartate 413. Residue tyrosine 496 is the Schiff-base intermediate with substrate; via topaquinone of the active site. Tyrosine 496 carries the 2',4',5'-topaquinone modification. Histidine 554 and histidine 556 together coordinate Cu cation. Ca(2+) contacts are provided by aspartate 563, leucine 564, aspartate 565, glutamate 603, tyrosine 697, aspartate 700, glutamate 702, aspartate 708, and alanine 709. Aspartate 563 contributes to the Mn(2+) binding site. Aspartate 565 lines the Mn(2+) pocket. Residues 680-701 (PEGKYPNRSTHDTGLGQYSKDN) form a disordered region. Aspartate 708 is a binding site for Mn(2+). Histidine 719 provides a ligand contact to Cu cation.

The protein belongs to the copper/topaquinone oxidase family. As to quaternary structure, homodimer. The cofactor is Cu cation. It depends on Zn(2+) as a cofactor. Ca(2+) serves as cofactor. Requires L-topaquinone as cofactor. Mn(2+) is required as a cofactor. Topaquinone (TPQ) is generated by copper-dependent autoxidation of a specific tyrosyl residue.

It localises to the periplasm. The catalysed reaction is a primary methyl amine + O2 + H2O = an aldehyde + H2O2 + NH4(+). It catalyses the reaction 2-phenylethylamine + O2 + H2O = 2-phenylacetaldehyde + H2O2 + NH4(+). Its pathway is amino-acid degradation; L-phenylalanine degradation; phenylacetate from L-phenylalanine: step 2/3. With respect to regulation, inhibited by 2-hydrazinopyridine. Functionally, the enzyme prefers aromatic over aliphatic amines. The protein is Primary amine oxidase (tynA) of Escherichia coli (strain K12).